Here is a 203-residue protein sequence, read N- to C-terminus: ATP-dependent Clp protease proteolytic subunit (203 aa).

Ser100 serves as the catalytic Nucleophile. His125 is a catalytic residue.

This sequence belongs to the peptidase S14 family. In terms of assembly, fourteen ClpP subunits assemble into 2 heptameric rings which stack back to back to give a disk-like structure with a central cavity, resembling the structure of eukaryotic proteasomes.

It localises to the cytoplasm. The catalysed reaction is Hydrolysis of proteins to small peptides in the presence of ATP and magnesium. alpha-casein is the usual test substrate. In the absence of ATP, only oligopeptides shorter than five residues are hydrolyzed (such as succinyl-Leu-Tyr-|-NHMec, and Leu-Tyr-Leu-|-Tyr-Trp, in which cleavage of the -Tyr-|-Leu- and -Tyr-|-Trp bonds also occurs).. Cleaves peptides in various proteins in a process that requires ATP hydrolysis. Has a chymotrypsin-like activity. Plays a major role in the degradation of misfolded proteins. The protein is ATP-dependent Clp protease proteolytic subunit of Anaeromyxobacter dehalogenans (strain 2CP-1 / ATCC BAA-258).